Reading from the N-terminus, the 334-residue chain is Heat-inducible transcription repressor HrcA (334 aa).

The protein belongs to the HrcA family.

In terms of biological role, negative regulator of class I heat shock genes (grpE-dnaK-dnaJ and groELS operons). Prevents heat-shock induction of these operons. In Acidovorax ebreus (strain TPSY) (Diaphorobacter sp. (strain TPSY)), this protein is Heat-inducible transcription repressor HrcA.